The following is a 412-amino-acid chain: Peptidase T (412 aa).

Histidine 84 lines the Zn(2+) pocket. The active site involves aspartate 86. Zn(2+) is bound at residue aspartate 146. Glutamate 179 serves as the catalytic Proton acceptor. 3 residues coordinate Zn(2+): glutamate 180, aspartate 202, and histidine 385.

It belongs to the peptidase M20B family. The cofactor is Zn(2+).

The protein localises to the cytoplasm. The catalysed reaction is Release of the N-terminal residue from a tripeptide.. Cleaves the N-terminal amino acid of tripeptides. The chain is Peptidase T from Haemophilus influenzae (strain PittEE).